A 496-amino-acid polypeptide reads, in one-letter code: MKMDSAVSEEAFERLTAKLKARVGGEIYSSWFGRLKLDDISKSIVRLSVPTAFLRSWINNHYSELLTELWQEENPQILKVEVVVRGVSRVVRSAAPAETCDNAEAKPAVTPREKMVFPVGQSFGGQSLGEKRGSAVVAESAAATDAVLGSPLDPRYTFDTFVDGASNRVALAAARTIAEAGSSAVRFNPLFIHASVGLGKTHLLQAIAAAALQRQEKARVVYLTAEYFMWRFATAIRDNNALSFKEQLRDIDLLVIDDMQFLQGKSIQHEFCHLLNTLLDSAKQVVVAADRAPSELESLDVRVRSRLQGGVALEVAAPDYEMRLEMLRRRLASAQCEDASLDIGEEILAHVARTVTGSGRELEGAFNQLLFRQSFEPNISIDRVDELLGHLTRAGEPKRIRIEEIQRIVARHYNVSKQDLLSNRRTRTIVKPRQVAMYLAKMMTPRSLPEIGRRFGGRDHTTVLHAVRKIEDLVGADTKLAQELELLKRLINDQAA.

Positions 1–76 are domain I, interacts with DnaA modulators; the sequence is MKMDSAVSEE…TELWQEENPQ (76 aa). The segment at 76–150 is domain II; sequence QILKVEVVVR…AAATDAVLGS (75 aa). The segment at 151–373 is domain III, AAA+ region; it reads PLDPRYTFDT…GAFNQLLFRQ (223 aa). ATP-binding residues include Gly-197, Gly-199, Lys-200, and Thr-201. A domain IV, binds dsDNA region spans residues 374–496; the sequence is SFEPNISIDR…LKRLINDQAA (123 aa).

Belongs to the DnaA family. Oligomerizes as a right-handed, spiral filament on DNA at oriC.

It localises to the cytoplasm. Its function is as follows. Plays an essential role in the initiation and regulation of chromosomal replication. ATP-DnaA binds to the origin of replication (oriC) to initiate formation of the DNA replication initiation complex once per cell cycle. Binds the DnaA box (a 9 base pair repeat at the origin) and separates the double-stranded (ds)DNA. Forms a right-handed helical filament on oriC DNA; dsDNA binds to the exterior of the filament while single-stranded (ss)DNA is stabiized in the filament's interior. The ATP-DnaA-oriC complex binds and stabilizes one strand of the AT-rich DNA unwinding element (DUE), permitting loading of DNA polymerase. After initiation quickly degrades to an ADP-DnaA complex that is not apt for DNA replication. Binds acidic phospholipids. This Brucella suis biovar 1 (strain 1330) protein is Chromosomal replication initiator protein DnaA.